The chain runs to 725 residues: ABC transporter G family member 19 (725 aa).

An ABC transporter domain is found at 73–325; the sequence is LNFNNLQYDV…FSDFGRPIPE (253 aa). 117-124 is a binding site for ATP; the sequence is GASGAGKS. The ABC transmembrane type-2 domain maps to 419–629; it reads FETFILAKRY…PYEAVLINEF (211 aa). 7 helical membrane-spanning segments follow: residues 438 to 458, 473 to 493, 515 to 535, 537 to 557, 577 to 597, 606 to 626, and 698 to 718; these read LVGT…TVYW, LFAF…PVFI, ISHS…FSAI, FWTV…LLIY, IMLC…LSGF, FYWT…AVLI, and LWIT…ALLF.

It belongs to the ABC transporter superfamily. ABCG family. Eye pigment precursor importer (TC 3.A.1.204) subfamily.

It localises to the vacuole membrane. Its function is as follows. Confers selective resistance to kanamycin. This chain is ABC transporter G family member 19 (ABCG19), found in Arabidopsis thaliana (Mouse-ear cress).